We begin with the raw amino-acid sequence, 215 residues long: Large ribosomal subunit protein uL16 (215 aa).

The segment at 1–22 (MGRRPARCYRQPKGKPYPKSRY) is disordered.

The protein belongs to the universal ribosomal protein uL16 family.

The protein is Large ribosomal subunit protein uL16 (RPL10) of Tetrahymena thermophila (strain SB210).